Here is a 297-residue protein sequence, read N- to C-terminus: Homoserine kinase (297 aa).

ATP is bound at residue 85 to 95 (PPTRGMGSSSA).

It belongs to the GHMP kinase family. Homoserine kinase subfamily.

Its subcellular location is the cytoplasm. The catalysed reaction is L-homoserine + ATP = O-phospho-L-homoserine + ADP + H(+). The protein operates within amino-acid biosynthesis; L-threonine biosynthesis; L-threonine from L-aspartate: step 4/5. Catalyzes the ATP-dependent phosphorylation of L-homoserine to L-homoserine phosphate. The polypeptide is Homoserine kinase (Desulfitobacterium hafniense (strain DSM 10664 / DCB-2)).